We begin with the raw amino-acid sequence, 312 residues long: DNA-directed RNA polymerase subunit alpha (312 aa).

Residues 1–226 (MIEFEKPIIT…EHLNLFTDLT (226 aa)) are alpha N-terminal domain (alpha-NTD). Positions 243-312 (DEKVLDRTIE…DLGLGLKNDK (70 aa)) are alpha C-terminal domain (alpha-CTD).

Belongs to the RNA polymerase alpha chain family. As to quaternary structure, homodimer. The RNAP catalytic core consists of 2 alpha, 1 beta, 1 beta' and 1 omega subunit. When a sigma factor is associated with the core the holoenzyme is formed, which can initiate transcription.

The catalysed reaction is RNA(n) + a ribonucleoside 5'-triphosphate = RNA(n+1) + diphosphate. Its function is as follows. DNA-dependent RNA polymerase catalyzes the transcription of DNA into RNA using the four ribonucleoside triphosphates as substrates. The protein is DNA-directed RNA polymerase subunit alpha of Streptococcus pyogenes serotype M3 (strain ATCC BAA-595 / MGAS315).